Reading from the N-terminus, the 170-residue chain is M-agglutinin (170 aa).

An N-terminal signal peptide occupies residues 1 to 24 (MNLKKIAIASSVFAGITMALTCHA).

In terms of biological role, this protein is a non-fimbrial hemagglutinin that is specific for blood group M. This is M-agglutinin (bmaE) from Escherichia coli.